The primary structure comprises 295 residues: Fructose-bisphosphate aldolase class 1 (295 aa).

Glutamate 176 acts as the Proton acceptor in catalysis. The active-site Schiff-base intermediate with dihydroxyacetone-P is the lysine 213.

The protein belongs to the class I fructose-bisphosphate aldolase family.

It carries out the reaction beta-D-fructose 1,6-bisphosphate = D-glyceraldehyde 3-phosphate + dihydroxyacetone phosphate. It participates in carbohydrate degradation; glycolysis; D-glyceraldehyde 3-phosphate and glycerone phosphate from D-glucose: step 4/4. The chain is Fructose-bisphosphate aldolase class 1 from Treponema denticola (strain ATCC 35405 / DSM 14222 / CIP 103919 / JCM 8153 / KCTC 15104).